The chain runs to 777 residues: Semaphorin-4F (777 aa).

A signal peptide spans 1–40 (MLARAERPRPGPRPPPVSLFPPPSSLLLLLLAMLSAPVCG). At 41-667 (RVPRSVPRTS…PANRAHTVVG (627 aa)) the chain is on the extracellular side. The Sema domain occupies 48–516 (RTSLPISEAD…SHTEVTQVNT (469 aa)). Asn-70 carries N-linked (GlcNAc...) asparagine glycosylation. Cys-118 and Cys-128 form a disulfide bridge. An N-linked (GlcNAc...) asparagine glycan is attached at Asn-139. Cystine bridges form between Cys-146-Cys-155, Cys-279-Cys-390, and Cys-303-Cys-349. Asn-515 is a glycosylation site (N-linked (GlcNAc...) asparagine). Residues 518-569 (NCGRLQSCSECILAQDPVCAWSFRLDACVAHAGEHRGMVQDIESADVSSLCP) enclose the PSI domain. Disulfide bonds link Cys-519–Cys-536, Cys-528–Cys-545, and Cys-593–Cys-634. Residues 586 to 641 (VGHVVLPCSPSSAWASCVWHQPSGVTSLTPRRDGLEVVVTPGAMGAYACECQEGGA) enclose the Ig-like C2-type domain. The helical transmembrane segment at 668–688 (AGLVGFFLGVLAASLTLLLIG) threads the bilayer. Topologically, residues 689–777 (RRQQRRRQRE…PLATCDETSI (89 aa)) are cytoplasmic. The interval 703–742 (DKVGLDLGAPPSGTTSYSQDPPSPSPEDERLPLALGKRGS) is disordered. Phosphoserine occurs at positions 725 and 727. A PDZ-binding motif is present at residues 775-777 (TSI).

It belongs to the semaphorin family. In terms of assembly, interacts (via PDZ-binding motif) with DLG4/SAP90 (via PDZ domain 2); this interaction may promote translocation of DLG4/SAP90 to the membrane. In terms of tissue distribution, expressed throughout the adult brain, where it shows particularly strong expression in the hippocampus, corpus callosum, granular layer and deep nuclei of the cerebellum, and the mitral layer of the olfactory bulb (at protein level). At the cellular level, detected in neuronal precursors, postmitotic neurons, pyramidal neurons, and glial cells including mature oligodendocytes and oligodendroglial precursor cells (at protein level).

It is found in the cell membrane. The protein localises to the postsynaptic density. It localises to the perikaryon. Its subcellular location is the cell projection. The protein resides in the dendrite. Functionally, probable cell surface receptor that regulates oligodendroglial precursor cell migration. Might also regulate differentiation of oligodendroglial precursor cells. Has growth cone collapse activity against retinal ganglion-cell axons. This Mus musculus (Mouse) protein is Semaphorin-4F (Sema4f).